The sequence spans 279 residues: Orotidine 5'-phosphate decarboxylase (279 aa).

Substrate-binding positions include aspartate 8, lysine 30, 58 to 67 (DLKIHDIPNT), threonine 117, arginine 177, glutamine 186, glycine 206, and arginine 207. Residue lysine 60 is the Proton donor of the active site.

It belongs to the OMP decarboxylase family. Type 1 subfamily. As to quaternary structure, homodimer.

The enzyme catalyses orotidine 5'-phosphate + H(+) = UMP + CO2. It functions in the pathway pyrimidine metabolism; UMP biosynthesis via de novo pathway; UMP from orotate: step 2/2. Its function is as follows. Catalyzes the decarboxylation of orotidine 5'-monophosphate (OMP) to uridine 5'-monophosphate (UMP). This is Orotidine 5'-phosphate decarboxylase from Campylobacter jejuni (strain RM1221).